Reading from the N-terminus, the 406-residue chain is uncharacterized protein (406 aa).

The next 10 helical transmembrane spans lie at Ser-7 to Ile-27, Val-43 to Ile-63, Leu-69 to Leu-89, Leu-98 to Leu-118, Gly-155 to Phe-175, Ile-220 to Leu-240, Trp-253 to Tyr-273, Leu-297 to Met-317, Val-352 to Val-372, and Leu-374 to Leu-394.

The protein belongs to the major facilitator superfamily.

It is found in the cell membrane. This is an uncharacterized protein from Bacillus subtilis (strain 168).